The sequence spans 643 residues: 1-deoxy-D-xylulose-5-phosphate synthase (643 aa).

Residues His-72 and 113 to 115 (GHA) contribute to the thiamine diphosphate site. A Mg(2+)-binding site is contributed by Asp-144. Thiamine diphosphate contacts are provided by residues 145 to 146 (GA), Asn-174, Tyr-287, and Glu-370. Residue Asn-174 participates in Mg(2+) binding.

The protein belongs to the transketolase family. DXPS subfamily. As to quaternary structure, homodimer. It depends on Mg(2+) as a cofactor. Requires thiamine diphosphate as cofactor.

The enzyme catalyses D-glyceraldehyde 3-phosphate + pyruvate + H(+) = 1-deoxy-D-xylulose 5-phosphate + CO2. The protein operates within metabolic intermediate biosynthesis; 1-deoxy-D-xylulose 5-phosphate biosynthesis; 1-deoxy-D-xylulose 5-phosphate from D-glyceraldehyde 3-phosphate and pyruvate: step 1/1. Its function is as follows. Catalyzes the acyloin condensation reaction between C atoms 2 and 3 of pyruvate and glyceraldehyde 3-phosphate to yield 1-deoxy-D-xylulose-5-phosphate (DXP). This is 1-deoxy-D-xylulose-5-phosphate synthase from Synechococcus sp. (strain CC9605).